The chain runs to 554 residues: CTP synthase (554 aa).

Residues 1–279 (MSQPRAEHVT…DAFLIRRLDL (279 aa)) form an amidoligase domain region. Ser-21 provides a ligand contact to CTP. Ser-21 is a binding site for UTP. ATP contacts are provided by residues 22 to 27 (SLGKGL) and Asp-79. Positions 79 and 153 each coordinate Mg(2+). CTP contacts are provided by residues 160-162 (DIE), 200-205 (KTKPTQ), and Lys-236. Residues 200–205 (KTKPTQ) and Lys-236 contribute to the UTP site. In terms of domain architecture, Glutamine amidotransferase type-1 spans 304-551 (TVALVGKYID…VKAGLKHKND (248 aa)). Gly-367 lines the L-glutamine pocket. The active-site Nucleophile; for glutamine hydrolysis is the Cys-394. L-glutamine is bound by residues 395-398 (LGLQ), Glu-417, and Arg-478. Catalysis depends on residues His-524 and Glu-526.

Belongs to the CTP synthase family. In terms of assembly, homotetramer.

It catalyses the reaction UTP + L-glutamine + ATP + H2O = CTP + L-glutamate + ADP + phosphate + 2 H(+). It carries out the reaction L-glutamine + H2O = L-glutamate + NH4(+). The catalysed reaction is UTP + NH4(+) + ATP = CTP + ADP + phosphate + 2 H(+). The protein operates within pyrimidine metabolism; CTP biosynthesis via de novo pathway; CTP from UDP: step 2/2. Its activity is regulated as follows. Allosterically activated by GTP, when glutamine is the substrate; GTP has no effect on the reaction when ammonia is the substrate. The allosteric effector GTP functions by stabilizing the protein conformation that binds the tetrahedral intermediate(s) formed during glutamine hydrolysis. Inhibited by the product CTP, via allosteric rather than competitive inhibition. Its function is as follows. Catalyzes the ATP-dependent amination of UTP to CTP with either L-glutamine or ammonia as the source of nitrogen. Regulates intracellular CTP levels through interactions with the four ribonucleotide triphosphates. In Corynebacterium kroppenstedtii (strain DSM 44385 / JCM 11950 / CIP 105744 / CCUG 35717), this protein is CTP synthase.